Reading from the N-terminus, the 618-residue chain is tRNA endonuclease vms-1 (618 aa).

A C2H2-type zinc finger spans residues 59–85; the sequence is DQCTTCNCPVDFGDRAVLLEHYQSLFH. A VLRF1 domain is found at 170-311; it reads RPFDCAIFLW…SDCWQRLQQV (142 aa). The active site involves Gln-213. ANK repeat units lie at residues 437–466 and 470–496; these read NRST…CDSS and GAGL…VKNE. The interval 502-539 is disordered; sequence ARTHIPEPKKKVELTEEQEREQAERKKEKKARQKEKEK. Residues 505–515 are compositionally biased toward basic and acidic residues; sequence HIPEPKKKVEL. Residues 510-557 adopt a coiled-coil conformation; the sequence is KKKVELTEEQEREQAERKKEKKARQKEKEKLKKEIAKRDVEEMEERQK.

It belongs to the ANKZF1/VMS1 family. In terms of tissue distribution, in larval stages and in adults, expressed in intestinal cells, specific neurons in the head and the tail, and in the ventral nerve cord.

The protein localises to the cytoplasm. The protein resides in the mitochondrion. Endonuclease that cleaves polypeptidyl-tRNAs downstream of the ribosome-associated quality control (RQC) pathway to release incompletely synthesized polypeptides for degradation. The RQC pathway disassembles aberrantly stalled translation complexes to recycle or degrade the constituent parts. Dispensable for viability and growth but is required for protection against oxidative stress and for wild-type life span. This chain is tRNA endonuclease vms-1 (vms-1), found in Caenorhabditis elegans.